A 393-amino-acid chain; its full sequence is Formate-dependent phosphoribosylglycinamide formyltransferase (393 aa).

N(1)-(5-phospho-beta-D-ribosyl)glycinamide-binding positions include 22 to 23 (EL) and E82. ATP-binding positions include R114, K155, 160–165 (SSGHGQ), 195–198 (EGFI), and E203. Residues 119-308 (RLAAEELGLK…QFALHARAIL (190 aa)) enclose the ATP-grasp domain. 2 residues coordinate Mg(2+): E267 and E279. N(1)-(5-phospho-beta-D-ribosyl)glycinamide contacts are provided by residues D286, K356, and 363–364 (RR).

It belongs to the PurK/PurT family. Homodimer.

The enzyme catalyses N(1)-(5-phospho-beta-D-ribosyl)glycinamide + formate + ATP = N(2)-formyl-N(1)-(5-phospho-beta-D-ribosyl)glycinamide + ADP + phosphate + H(+). It participates in purine metabolism; IMP biosynthesis via de novo pathway; N(2)-formyl-N(1)-(5-phospho-D-ribosyl)glycinamide from N(1)-(5-phospho-D-ribosyl)glycinamide (formate route): step 1/1. Its function is as follows. Involved in the de novo purine biosynthesis. Catalyzes the transfer of formate to 5-phospho-ribosyl-glycinamide (GAR), producing 5-phospho-ribosyl-N-formylglycinamide (FGAR). Formate is provided by PurU via hydrolysis of 10-formyl-tetrahydrofolate. The polypeptide is Formate-dependent phosphoribosylglycinamide formyltransferase (Actinobacillus pleuropneumoniae serotype 3 (strain JL03)).